Consider the following 201-residue polypeptide: Probable nicotinate-nucleotide adenylyltransferase (201 aa).

This sequence belongs to the NadD family.

The enzyme catalyses nicotinate beta-D-ribonucleotide + ATP + H(+) = deamido-NAD(+) + diphosphate. It participates in cofactor biosynthesis; NAD(+) biosynthesis; deamido-NAD(+) from nicotinate D-ribonucleotide: step 1/1. In terms of biological role, catalyzes the reversible adenylation of nicotinate mononucleotide (NaMN) to nicotinic acid adenine dinucleotide (NaAD). The polypeptide is Probable nicotinate-nucleotide adenylyltransferase (Carboxydothermus hydrogenoformans (strain ATCC BAA-161 / DSM 6008 / Z-2901)).